Consider the following 422-residue polypeptide: L-threonine dehydratase biosynthetic IlvA (422 aa).

Lys56 is subject to N6-(pyridoxal phosphate)lysine. Residues Asn83, 189 to 193, and Ser315 each bind pyridoxal 5'-phosphate; that span reads GGGGL. The region spanning 339–413 is the ACT-like domain; that stretch reads HYFILNFPQR…FDPSNIYINE (75 aa).

It belongs to the serine/threonine dehydratase family. As to quaternary structure, homotetramer. Pyridoxal 5'-phosphate is required as a cofactor.

It catalyses the reaction L-threonine = 2-oxobutanoate + NH4(+). It participates in amino-acid biosynthesis; L-isoleucine biosynthesis; 2-oxobutanoate from L-threonine: step 1/1. Functionally, catalyzes the anaerobic formation of alpha-ketobutyrate and ammonia from threonine in a two-step reaction. The first step involved a dehydration of threonine and a production of enamine intermediates (aminocrotonate), which tautomerizes to its imine form (iminobutyrate). Both intermediates are unstable and short-lived. The second step is the nonenzymatic hydrolysis of the enamine/imine intermediates to form 2-ketobutyrate and free ammonia. In the low water environment of the cell, the second step is accelerated by RidA. The polypeptide is L-threonine dehydratase biosynthetic IlvA (ilvA) (Staphylococcus aureus (strain NCTC 8325 / PS 47)).